Here is a 518-residue protein sequence, read N- to C-terminus: Beta-secretase 2 (518 aa).

An N-terminal signal peptide occupies residues 1–20 (MGALARALLLPLLAQWLLRA). Positions 21-62 (APELAPAPFTLPLRVAAATNRVVAPTPGPGTPAERHADGLAL) are excised as a propeptide. The Extracellular portion of the chain corresponds to 21–473 (APELAPAPFT…SEPILWIVSY (453 aa)). In terms of domain architecture, Peptidase A1 spans 92–429 (YYLEMLIGTP…DRAQKRVGFA (338 aa)). The active site involves aspartate 110. An N-linked (GlcNAc...) asparagine glycan is attached at asparagine 170. Cystine bridges form between cysteine 233–cysteine 433, cysteine 292–cysteine 457, and cysteine 344–cysteine 393. Aspartate 303 is an active-site residue. A glycan (N-linked (GlcNAc...) asparagine) is linked at asparagine 366. The helical transmembrane segment at 474-494 (ALMSVCGAILLVLIVLLLLPF) threads the bilayer. At 495-518 (RCQRRPRDPEVVNDESSLVRHRWK) the chain is on the cytoplasmic side.

It belongs to the peptidase A1 family. As to quaternary structure, monomer. Interacts with RTN3 and RTN4. Post-translationally, undergoes autoproteolytic cleavage. In terms of processing, glycosylated. As to expression, brain. Present in neurons within the hippocampus, frontal cortex and temporal cortex (at protein level). Expressed at low levels in most peripheral tissues and at higher levels in colon, kidney, pancreas, placenta, prostate, stomach and trachea. Expressed at low levels in the brain. Found in spinal cord, medulla oblongata, substantia nigra and locus coruleus. Expressed in the ductal epithelium of both normal and malignant prostate.

The protein localises to the cell membrane. The protein resides in the golgi apparatus. It localises to the endoplasmic reticulum. It is found in the endosome. Its subcellular location is the melanosome. The catalysed reaction is Broad endopeptidase specificity. Cleaves Glu-Val-Asn-Leu-|-Asp-Ala-Glu-Phe in the Swedish variant of Alzheimer's amyloid precursor protein.. Its function is as follows. Responsible for the proteolytic processing of the amyloid precursor protein (APP). Cleaves APP, between residues 690 and 691, leading to the generation and extracellular release of beta-cleaved soluble APP, and a corresponding cell-associated C-terminal fragment which is later released by gamma-secretase. It has also been shown that it can cleave APP between residues 671 and 672. Involved in the proteolytic shedding of PMEL at early stages of melanosome biogenesis. Cleaves PMEL within the M-beta fragment to release the amyloidogenic PMEL luminal fragment containing M-alpha and a small portion of M-beta N-terminus. This is a prerequisite step for subsequent processing and assembly of PMEL fibrils into amyloid sheets. Responsible also for the proteolytic processing of CLTRN in pancreatic beta cells. In Homo sapiens (Human), this protein is Beta-secretase 2 (BACE2).